The following is a 285-amino-acid chain: Probable endonuclease 4 (285 aa).

Zn(2+)-binding residues include H67, H107, E144, D177, H180, H214, D227, H229, and E259.

This sequence belongs to the AP endonuclease 2 family. Zn(2+) serves as cofactor.

The catalysed reaction is Endonucleolytic cleavage to 5'-phosphooligonucleotide end-products.. Endonuclease IV plays a role in DNA repair. It cleaves phosphodiester bonds at apurinic or apyrimidinic (AP) sites, generating a 3'-hydroxyl group and a 5'-terminal sugar phosphate. This is Probable endonuclease 4 from Persephonella marina (strain DSM 14350 / EX-H1).